The following is a 71-amino-acid chain: U-scoloptoxin(21)-Sm1a (71 aa).

An N-terminal signal peptide occupies residues 1-21; that stretch reads MKSVIFALFLVYLLIVRAAEA. The interval 45-71 is disordered; the sequence is IELANDPNGPGRRRRAPAENEDFLKHS. Residues 60–71 are compositionally biased toward basic and acidic residues; it reads APAENEDFLKHS.

This sequence belongs to the scoloptoxin-21 family. In terms of tissue distribution, expressed by the venom gland.

It is found in the secreted. The protein is U-scoloptoxin(21)-Sm1a of Scolopendra morsitans (Tanzanian blue ringleg centipede).